The sequence spans 246 residues: uncharacterized protein (246 aa).

10-34 contacts NADP(+); the sequence is VITGASSGIGEETVNLLSENGAKLV. S140 contacts substrate. Residue Y153 is the Proton acceptor of the active site.

It belongs to the short-chain dehydrogenases/reductases (SDR) family.

This is an uncharacterized protein from Staphylococcus saprophyticus subsp. saprophyticus (strain ATCC 15305 / DSM 20229 / NCIMB 8711 / NCTC 7292 / S-41).